We begin with the raw amino-acid sequence, 425 residues long: Orexin/Hypocretin receptor type 1 (425 aa).

Residues 1–24 (MEPSATPGAQMGVPPGSREPSPVP) are disordered. Residues 1 to 46 (MEPSATPGAQMGVPPGSREPSPVPPDYEDEFLRYLWRDYLYPKQYE) are Extracellular-facing. The interval 26–41 (DYEDEFLRYLWRDYLY) is required for response to orexin-A. A helical membrane pass occupies residues 47–67 (WVLIAAYVAVFVVALVGNTLV). Residues 68–82 (CLAVWRNHHMRTVTN) are Cytoplasmic-facing. The chain crosses the membrane as a helical span at residues 83 to 105 (YFIVNLSLADVLVTAICLPASLL). At 106–119 (VDITESWLFGHALC) the chain is on the extracellular side. A disulfide bridge connects residues Cys-119 and Cys-202. Residues 120-140 (KVIPYLQAVSVSVAVLTLSFI) form a helical membrane-spanning segment. Residues 141–160 (ALDRWYAICHPLLFKSTARR) lie on the Cytoplasmic side of the membrane. A helical membrane pass occupies residues 161 to 182 (ARGSILGIWAVSLAIMVPQAAV). The Extracellular segment spans residues 183-213 (MECSSVLPELANRTRLFSVCDERWADDLYPK). The N-linked (GlcNAc...) asparagine glycan is linked to Asn-194. A helical membrane pass occupies residues 214-235 (IYHSCFFIVTYLAPLGLMAMAY). The Cytoplasmic portion of the chain corresponds to 236–298 (FQIFRKLWGR…QMRARRKTAK (63 aa)). Residues 299–321 (MLMVVLLVFALCYLPISVLNVLK) traverse the membrane as a helical segment. Suvorexant is bound at residue Asn-318. Residues 322-336 (RVFGMFRQASDREAV) are Extracellular-facing. The chain crosses the membrane as a helical span at residues 337 to 360 (YACFTFSHWLVYANSAANPIIYNF). The Cytoplasmic portion of the chain corresponds to 361 to 425 (LSGKFREQFK…VLTSVTTVLP (65 aa)).

Belongs to the G-protein coupled receptor 1 family.

The protein localises to the cell membrane. Its function is as follows. Moderately selective excitatory receptor for orexin-A and, with a lower affinity, for orexin-B neuropeptide. Triggers an increase in cytoplasmic Ca(2+) levels in response to orexin-A binding. This is Orexin/Hypocretin receptor type 1 from Homo sapiens (Human).